The following is a 144-amino-acid chain: Pleckstrin homology-like domain family A member 2 (144 aa).

Positions 18-111 constitute a PH domain; that stretch reads ILCEGELEKR…AAITMALIDF (94 aa). S140 is subject to Phosphoserine.

It belongs to the PHLDA2 family. In terms of tissue distribution, specifically expressed at high levels in extraembryonic tissues in the developing conceptus (at protein level). Expressed in placenta and yolc sac. Expressed at low levels in fetal liver and kidney.

It is found in the cytoplasm. The protein localises to the membrane. In terms of biological role, plays a role in regulating placenta growth. May act via its PH domain that competes with other PH domain-containing proteins, thereby preventing their binding to membrane lipids. The polypeptide is Pleckstrin homology-like domain family A member 2 (Phlda2) (Mus musculus (Mouse)).